A 160-amino-acid chain; its full sequence is Ribosomal RNA large subunit methyltransferase H (160 aa).

Residues L76, G108, and 127-132 each bind S-adenosyl-L-methionine; that span reads LGKMTW.

The protein belongs to the RNA methyltransferase RlmH family. As to quaternary structure, homodimer.

It is found in the cytoplasm. The catalysed reaction is pseudouridine(1915) in 23S rRNA + S-adenosyl-L-methionine = N(3)-methylpseudouridine(1915) in 23S rRNA + S-adenosyl-L-homocysteine + H(+). In terms of biological role, specifically methylates the pseudouridine at position 1915 (m3Psi1915) in 23S rRNA. In Rhizobium johnstonii (strain DSM 114642 / LMG 32736 / 3841) (Rhizobium leguminosarum bv. viciae), this protein is Ribosomal RNA large subunit methyltransferase H.